Consider the following 168-residue polypeptide: Cell division inhibitor SulA (168 aa).

Positions 106–112 are ftsZ binding; it reads ALLTGNY. Residues 161 to 168 are lon protease binding; the sequence is KIHSYLYH.

This sequence belongs to the SulA family. In terms of assembly, interacts with FtsZ. Is rapidly cleaved and degraded by the Lon protease once DNA damage is repaired.

Component of the SOS system and an inhibitor of cell division. Accumulation of SulA causes rapid cessation of cell division and the appearance of long, non-septate filaments. In the presence of GTP, binds a polymerization-competent form of FtsZ in a 1:1 ratio, thus inhibiting FtsZ polymerization and therefore preventing it from participating in the assembly of the Z ring. This mechanism prevents the premature segregation of damaged DNA to daughter cells during cell division. The protein is Cell division inhibitor SulA of Yersinia pseudotuberculosis serotype O:1b (strain IP 31758).